The chain runs to 219 residues: MSESENNTTPAVAARDDRLVWVDLEMTGLDLKRHVIVEVAALVTDANLNVLGEGVDLVVHATEEELAQMDDFVTNMHESSGLTEQIRESAVTLKEAEDAVLALIEKHCDPAHPAPLAGNSIATDRAFIREQMPRLDEALHYRMVDVSSVKELARRWYPRVYYKQPEKGLAHRALADIVESIRELDYYRRSFFVAEPGPTSEQCADDAQAAVDRFAPYFD.

Residues 19 to 184 (LVWVDLEMTG…ADIVESIREL (166 aa)) form the Exonuclease domain. The active site involves tyrosine 141.

The protein belongs to the oligoribonuclease family.

The protein localises to the cytoplasm. Functionally, 3'-to-5' exoribonuclease specific for small oligoribonucleotides. In Corynebacterium glutamicum (strain R), this protein is Oligoribonuclease.